A 568-amino-acid polypeptide reads, in one-letter code: Pentatricopeptide repeat-containing protein At1g73400, mitochondrial (568 aa).

Residues 1–55 (MMRRLVSYFVRSRFSLHLSTTPPQRSALFSHILSSHLDSIQINKKISSFSVHRFC) constitute a mitochondrion transit peptide. 8 PPR repeats span residues 233-263 (EINA…MRHR), 267-301 (DANT…GHKP), 302-336 (ENFT…GSAV), 340-374 (TAKT…GCLP), 375-409 (DVST…GYPP), 410-444 (DIVT…RCAP), 445-479 (SVQT…DCVQ), and 480-514 (DVET…GLKL).

This sequence belongs to the PPR family. P subfamily.

It localises to the mitochondrion. This chain is Pentatricopeptide repeat-containing protein At1g73400, mitochondrial, found in Arabidopsis thaliana (Mouse-ear cress).